The sequence spans 296 residues: Lipoyl synthase (296 aa).

[4Fe-4S] cluster contacts are provided by C37, C42, C48, C63, C67, C70, and S276. The Radical SAM core domain occupies 49–265; sequence WSKKHTTVMI…ERLAKTKGFL (217 aa).

It belongs to the radical SAM superfamily. Lipoyl synthase family. Requires [4Fe-4S] cluster as cofactor.

It is found in the cytoplasm. It carries out the reaction [[Fe-S] cluster scaffold protein carrying a second [4Fe-4S](2+) cluster] + N(6)-octanoyl-L-lysyl-[protein] + 2 oxidized [2Fe-2S]-[ferredoxin] + 2 S-adenosyl-L-methionine + 4 H(+) = [[Fe-S] cluster scaffold protein] + N(6)-[(R)-dihydrolipoyl]-L-lysyl-[protein] + 4 Fe(3+) + 2 hydrogen sulfide + 2 5'-deoxyadenosine + 2 L-methionine + 2 reduced [2Fe-2S]-[ferredoxin]. Its pathway is protein modification; protein lipoylation via endogenous pathway; protein N(6)-(lipoyl)lysine from octanoyl-[acyl-carrier-protein]: step 2/2. Its function is as follows. Catalyzes the radical-mediated insertion of two sulfur atoms into the C-6 and C-8 positions of the octanoyl moiety bound to the lipoyl domains of lipoate-dependent enzymes, thereby converting the octanoylated domains into lipoylated derivatives. The sequence is that of Lipoyl synthase from Rickettsia rickettsii (strain Iowa).